Here is a 262-residue protein sequence, read N- to C-terminus: Acyl-[acyl-carrier-protein]--UDP-N-acetylglucosamine O-acyltransferase (262 aa).

It belongs to the transferase hexapeptide repeat family. LpxA subfamily. In terms of assembly, homotrimer.

The protein localises to the cytoplasm. The enzyme catalyses a (3R)-hydroxyacyl-[ACP] + UDP-N-acetyl-alpha-D-glucosamine = a UDP-3-O-[(3R)-3-hydroxyacyl]-N-acetyl-alpha-D-glucosamine + holo-[ACP]. It functions in the pathway glycolipid biosynthesis; lipid IV(A) biosynthesis; lipid IV(A) from (3R)-3-hydroxytetradecanoyl-[acyl-carrier-protein] and UDP-N-acetyl-alpha-D-glucosamine: step 1/6. Its function is as follows. Involved in the biosynthesis of lipid A, a phosphorylated glycolipid that anchors the lipopolysaccharide to the outer membrane of the cell. The sequence is that of Acyl-[acyl-carrier-protein]--UDP-N-acetylglucosamine O-acyltransferase from Campylobacter curvus (strain 525.92).